We begin with the raw amino-acid sequence, 824 residues long: Disintegrin and metalloproteinase domain-containing protein 17 (824 aa).

Residues Met1–Ala17 form the signal peptide. Residues Pro18 to Arg214 constitute a propeptide that is removed on maturation. Asn103, Asn157, and Asn174 each carry an N-linked (GlcNAc...) asparagine glycan. Positions Lys182–Val189 match the Cysteine switch motif. Cys184 contributes to the Zn(2+) binding site. The Extracellular segment spans residues Arg215–Asn671. Residues Asn223–Ser474 enclose the Peptidase M12B domain. Disulfide bonds link Cys225-Cys333, Cys365-Cys469, and Cys423-Cys453. An N-linked (GlcNAc...) asparagine glycan is attached at Asn264. Residue His405 coordinates Zn(2+). Residue Glu406 is part of the active site. Residues His409 and His415 each coordinate Zn(2+). N-linked (GlcNAc...) asparagine glycans are attached at residues Asn452, Asn498, Asn539, and Asn551. In terms of domain architecture, Disintegrin spans Asn475–Asp563. Cystine bridges form between Cys534/Cys555, Cys573/Cys582, Cys578/Cys591, and Cys593/Cys600. Residue Asn594 is glycosylated (N-linked (GlcNAc...) asparagine). Residues Cys603 to Asn671 are crambin-like. A helical transmembrane segment spans residues Ile672–His692. The Cytoplasmic portion of the chain corresponds to Cys693–Cys824. Short sequence motifs (SH3-binding) lie at residues Pro731–Arg738 and Pro741–Ala748. Residues Ala732–Cys824 form a disordered region. Residue Thr735 is modified to Phosphothreonine; by MAPK14. Low complexity predominate over residues Pro741–Pro752. At Thr761 the chain carries Phosphothreonine. Ser767 is modified (phosphoserine). Composition is skewed to basic and acidic residues over residues Thr768–Pro781, Ser791–Ala807, and Asn815–Cys824. A phosphoserine mark is found at Ser791 and Ser819.

In terms of assembly, interacts with MAD2L1, MAPK14 and MUC1. Interacts with iRhom1/RHBDF1 and iRhom2/RHBDF2. Interacts with FRMD8 via its interaction with iRhom1/RHBDF1 and iRhom2/RHBDF2. Interacts with TSPAN8. It depends on Zn(2+) as a cofactor. The precursor is cleaved by a furin endopeptidase. Post-translationally, phosphorylated. Stimulation by growth factor or phorbol 12-myristate 13-acetate induces phosphorylation of Ser-819 but decreases phosphorylation of Ser-791. Phosphorylation at Thr-735 by MAPK14 is required for ADAM17-mediated ectodomain shedding. In terms of tissue distribution, ubiquitously expressed. Expressed at highest levels in adult heart, placenta, skeletal muscle, pancreas, spleen, thymus, prostate, testes, ovary and small intestine, and in fetal brain, lung, liver and kidney. Expressed in natural killer cells (at protein level).

The protein resides in the cell membrane. The catalysed reaction is Narrow endopeptidase specificity. Cleaves Pro-Leu-Ala-Gln-Ala-|-Val-Arg-Ser-Ser-Ser in the membrane-bound, 26-kDa form of tumor necrosis factor alpha (TNFalpha). Similarly cleaves other membrane-anchored, cell-surface proteins to 'shed' the extracellular domains.. In terms of biological role, transmembrane metalloprotease which mediates the ectodomain shedding of a myriad of transmembrane proteins including adhesion proteins, growth factor precursors and cytokines important for inflammation and immunity. Cleaves the membrane-bound precursor of TNF-alpha to its mature soluble form. Responsible for the proteolytical release of soluble JAM3 from endothelial cells surface. Responsible for the proteolytic release of several other cell-surface proteins, including p75 TNF-receptor, interleukin 1 receptor type II, p55 TNF-receptor, transforming growth factor-alpha, L-selectin, growth hormone receptor, MUC1 and the amyloid precursor protein. Acts as an activator of Notch pathway by mediating cleavage of Notch, generating the membrane-associated intermediate fragment called Notch extracellular truncation (NEXT). Plays a role in the proteolytic processing of ACE2. Plays a role in hemostasis through shedding of GP1BA, the platelet glycoprotein Ib alpha chain. Mediates the proteolytic cleavage of LAG3, leading to release the secreted form of LAG3. Mediates the proteolytic cleavage of IL6R, leading to the release of secreted form of IL6R. Mediates the proteolytic cleavage and shedding of FCGR3A upon NK cell stimulation, a mechanism that allows for increased NK cell motility and detachment from opsonized target cells. Cleaves TREM2, resulting in shedding of the TREM2 ectodomain. This chain is Disintegrin and metalloproteinase domain-containing protein 17, found in Homo sapiens (Human).